The sequence spans 489 residues: 5'-AMP-activated protein kinase subunit gamma-3 (489 aa).

The tract at residues 1 to 95 (MEPELEHTLP…TRQEATFPKA (95 aa)) is disordered. The segment covering 32-47 (GENSWPSPAVATSSER) has biased composition (polar residues). 3 CBS domains span residues 197–258 (MATS…RSPL), 280–340 (CFKP…LLPR), and 355–415 (TFRD…HLDM). ADP contacts are provided by residues Arg225, 240–245 (MLTITD), Val285, 306–307 (HR), and Lys325. AMP is bound by residues Arg225, 240-245 (MLTITD), Val285, His306, 306-307 (HR), Lys325, Thr355, Ala360, 381-382 (SA), 397-400 (SRFD), Arg424, Leu432, His453, 453-454 (HR), and 469-472 (SLSD). Residues Arg225, 240 to 245 (MLTITD), Val285, 306 to 307 (HR), Arg307, and Lys325 each bind ATP. The AMPK pseudosubstrate signature appears at 293–314 (LFEAVYALIKNRIHRLPVLDPV). Residues 397 to 400 (SRFD), Arg424, Leu432, and 453 to 454 (HR) contribute to the ADP site. ATP contacts are provided by residues 397 to 400 (SRFD), Arg424, Leu432, and 453 to 454 (HR). The 60-residue stretch at 427 to 486 (CLEGVLSCQPHESLGEVIDRIAREQVHRLVLVDETQHLLGVVSLSDILQALVLSPAGIDA) folds into the CBS 4 domain.

It belongs to the 5'-AMP-activated protein kinase gamma subunit family. As to quaternary structure, AMPK is a heterotrimer of an alpha catalytic subunit (PRKAA1 or PRKAA2), a beta (PRKAB1 or PRKAB2) and a gamma non-catalytic subunits (PRKAG1, PRKAG2 or PRKAG3). Interacts with FNIP1 and FNIP2. Phosphorylated by ULK1; leading to negatively regulate AMPK activity and suggesting the existence of a regulatory feedback loop between ULK1 and AMPK. In terms of processing, glycosylated; O-GlcNAcylated by OGT, promoting the AMP-activated protein kinase (AMPK) activity.

In terms of biological role, AMP/ATP-binding subunit of AMP-activated protein kinase (AMPK), an energy sensor protein kinase that plays a key role in regulating cellular energy metabolism. In response to reduction of intracellular ATP levels, AMPK activates energy-producing pathways and inhibits energy-consuming processes: inhibits protein, carbohydrate and lipid biosynthesis, as well as cell growth and proliferation. AMPK acts via direct phosphorylation of metabolic enzymes, and by longer-term effects via phosphorylation of transcription regulators. AMPK also acts as a regulator of cellular polarity by remodeling the actin cytoskeleton; probably by indirectly activating myosin. The AMPK gamma3 subunit is a non-catalytic subunit with a regulatory role in muscle energy metabolism. It mediates binding to AMP, ADP and ATP, leading to AMPK activation or inhibition: AMP-binding results in allosteric activation of alpha catalytic subunit (PRKAA1 or PRKAA2) both by inducing phosphorylation and preventing dephosphorylation of catalytic subunits. ADP also stimulates phosphorylation, without stimulating already phosphorylated catalytic subunit. ATP promotes dephosphorylation of catalytic subunit, rendering the AMPK enzyme inactive. The polypeptide is 5'-AMP-activated protein kinase subunit gamma-3 (Prkag3) (Mus musculus (Mouse)).